The following is a 904-amino-acid chain: Translation initiation factor IF-2 (904 aa).

2 disordered regions span residues 134 to 248 and 267 to 315; these read RQRN…GSHV and HLSA…FERP. A compositionally biased stretch (basic and acidic residues) spans 136-177; it reads RNLDEQQRLAESDRVRDEEIQRKRDEEQAAKDRAEAERKAAE. 2 stretches are compositionally biased toward low complexity: residues 178 to 230 and 285 to 303; these read EAAA…STPA and GRPG…RGSN. The tr-type G domain occupies 403-572; that stretch reads TRPPVVTIMG…SLQAEVLELK (170 aa). The tract at residues 412–419 is G1; it reads GHVDHGKT. 412 to 419 is a GTP binding site; sequence GHVDHGKT. The G2 stretch occupies residues 437 to 441; that stretch reads GITQH. The tract at residues 458-461 is G3; it reads DTPG. GTP-binding positions include 458 to 462 and 512 to 515; these read DTPGH and NKID. The G4 stretch occupies residues 512-515; it reads NKID. A G5 region spans residues 548–550; sequence SAK.

The protein belongs to the TRAFAC class translation factor GTPase superfamily. Classic translation factor GTPase family. IF-2 subfamily.

The protein resides in the cytoplasm. Its function is as follows. One of the essential components for the initiation of protein synthesis. Protects formylmethionyl-tRNA from spontaneous hydrolysis and promotes its binding to the 30S ribosomal subunits. Also involved in the hydrolysis of GTP during the formation of the 70S ribosomal complex. The sequence is that of Translation initiation factor IF-2 from Xanthomonas oryzae pv. oryzae (strain PXO99A).